We begin with the raw amino-acid sequence, 738 residues long: Ethylene receptor (738 aa).

A run of 3 helical transmembrane segments spans residues 23–43 (ISDF…IYFV), 54–74 (VLVQ…INLW), and 89–109 (IAKV…VHII). Residues Cys-65 and His-69 each coordinate Cu cation. Residues 158–307 (DRHTILRTTL…VVADQVAVAL (150 aa)) form the GAF domain. The Histidine kinase domain maps to 350 to 589 (VMNHEMRTPM…IFIVKLGIPE (240 aa)). His-353 is modified (phosphohistidine; by autocatalysis). Positions 615 to 730 (KVLLMDDNGV…KMRSVLSDLL (116 aa)) constitute a Response regulatory domain. The residue at position 663 (Asp-663) is a 4-aspartylphosphate.

This sequence belongs to the ethylene receptor family. In terms of assembly, homodimer; disulfide-linked. The cofactor is Cu cation. Post-translationally, activation probably requires a transfer of a phosphate group between a His in the transmitter domain and an Asp of the receiver domain. Higher expression in arils than in seeds.

Its subcellular location is the endoplasmic reticulum membrane. The enzyme catalyses ATP + protein L-histidine = ADP + protein N-phospho-L-histidine.. In terms of biological role, may act early in the ethylene signal transduction pathway, possibly as an ethylene receptor, or as a regulator of the pathway. The polypeptide is Ethylene receptor (ETR1) (Passiflora edulis (Passion fruit)).